A 232-amino-acid chain; its full sequence is Lipoprotein-releasing system ATP-binding protein LolD (232 aa).

Residues 11–232 form the ABC transporter domain; that stretch reads IEVTDLQRAF…LHDGRLIEEY (222 aa). 47–54 contributes to the ATP binding site; that stretch reads GPSGAGKS.

The protein belongs to the ABC transporter superfamily. Lipoprotein translocase (TC 3.A.1.125) family. As to quaternary structure, the complex is composed of two ATP-binding proteins (LolD) and two transmembrane proteins (LolC and LolE).

The protein resides in the cell inner membrane. Part of the ABC transporter complex LolCDE involved in the translocation of mature outer membrane-directed lipoproteins, from the inner membrane to the periplasmic chaperone, LolA. Responsible for the formation of the LolA-lipoprotein complex in an ATP-dependent manner. The chain is Lipoprotein-releasing system ATP-binding protein LolD from Zymomonas mobilis subsp. mobilis (strain ATCC 10988 / DSM 424 / LMG 404 / NCIMB 8938 / NRRL B-806 / ZM1).